Here is a 644-residue protein sequence, read N- to C-terminus: Phosphomethylpyrimidine synthase (644 aa).

Substrate contacts are provided by residues Asn-236, Met-265, Tyr-294, His-330, 350–352, 391–394, and Glu-430; these read SRG and DGLR. His-434 contacts Zn(2+). Tyr-457 contacts substrate. A Zn(2+)-binding site is contributed by His-498. [4Fe-4S] cluster contacts are provided by Cys-578, Cys-581, and Cys-586. A disordered region spans residues 623 to 644; sequence RQKSEEFKASGSELYHPAVEAE.

The protein belongs to the ThiC family. As to quaternary structure, homodimer. [4Fe-4S] cluster serves as cofactor.

The catalysed reaction is 5-amino-1-(5-phospho-beta-D-ribosyl)imidazole + S-adenosyl-L-methionine = 4-amino-2-methyl-5-(phosphooxymethyl)pyrimidine + CO + 5'-deoxyadenosine + formate + L-methionine + 3 H(+). It participates in cofactor biosynthesis; thiamine diphosphate biosynthesis. Catalyzes the synthesis of the hydroxymethylpyrimidine phosphate (HMP-P) moiety of thiamine from aminoimidazole ribotide (AIR) in a radical S-adenosyl-L-methionine (SAM)-dependent reaction. The chain is Phosphomethylpyrimidine synthase from Aliivibrio fischeri (strain MJ11) (Vibrio fischeri).